We begin with the raw amino-acid sequence, 200 residues long: Serine/arginine-rich splicing factor RSZ22 (200 aa).

One can recognise an RRM domain in the interval 2–71 (SRVYVGNLDP…NGWRVEQSHN (70 aa)). A compositionally biased stretch (basic and acidic residues) spans 62–83 (NGWRVEQSHNRGERGGGGRGGD). 2 disordered regions span residues 62-97 (NGWRVEQSHNRGERGGGGRGGDRGGGGGGRGGRGGS) and 112-200 (RECR…RSRS). Over residues 84 to 96 (RGGGGGGRGGRGG) the composition is skewed to gly residues. A CCHC-type zinc finger spans residues 99 to 116 (LKCYECGETGHFARECRN). The segment covering 120 to 137 (TGRRRSKSRSRTPPRYRR) has biased composition (basic residues). Phosphoserine occurs at positions 138, 147, 152, 160, 162, 174, and 200. Residues 138 to 150 (SPSYGRRSYSPRA) are compositionally biased toward low complexity. Residues 151–166 (RSPPPPRRRSPSPPPA) are compositionally biased toward pro residues.

This sequence belongs to the splicing factor SR family. RSZ subfamily. As to quaternary structure, component of the spliceosome. Interacts with AFC2, RS2Z33 and RNU1. Extensively phosphorylated on serine residues in the RS domain. Phosphorylated by AFC2. In terms of tissue distribution, expressed in primary and lateral roots, stems, petioles, abaxial and adaxial epidermis cells, trichomes, unopened flowers, anther filaments, anthers, stigma, pollen, pollen tube, ovule funiculi, integuments, embryo sac and developing seeds.

The protein localises to the nucleus speckle. Its subcellular location is the nucleus. It is found in the nucleolus. It localises to the nucleoplasm. The protein resides in the cytoplasm. Sequence-specific RNA-binding protein probably involved in pre-mRNA splicing. In vitro, can complement efficiently splicing-deficient mammalian SRSF7-depleted HeLa cell extract. The protein is Serine/arginine-rich splicing factor RSZ22 (RSZ22) of Arabidopsis thaliana (Mouse-ear cress).